The following is a 63-amino-acid chain: Large ribosomal subunit protein uL29 (63 aa).

This sequence belongs to the universal ribosomal protein uL29 family.

The polypeptide is Large ribosomal subunit protein uL29 (Christiangramia forsetii (strain DSM 17595 / CGMCC 1.15422 / KT0803) (Gramella forsetii)).